The sequence spans 485 residues: Glycinin G2 (485 aa).

Residues Met1–Ala18 form the signal peptide. 2 cysteine pairs are disulfide-bonded: Cys28-Cys61 and Cys104-Cys307. A Cupin type-1 1 domain is found at Leu33–Arg238. The span at Tyr108–Gly118 shows a compositional bias: polar residues. Disordered stretches follow at residues Tyr108–Val130, Tyr192–Ser215, and Thr262–Ser298. The segment covering Tyr192–Gly205 has biased composition (low complexity). Residues Glu272–Gln281 are compositionally biased toward acidic residues. A propeptide spanning residues Arg297–Asn300 is cleaved from the precursor. Positions Gln313 to Arg462 constitute a Cupin type-1 2 domain. The Vacuolar targeting signal signature appears at Pro476–Ala485. A propeptide spanning residues Arg481–Ala485 is cleaved from the precursor.

The protein belongs to the 11S seed storage protein (globulins) family. As to quaternary structure, hexamer; each subunit is composed of an acidic and a basic chain derived from a single precursor and linked by a disulfide bond. In terms of processing, during soybean germination, seed storage proteins are hydrolyzed by protease/26S proteasome. Exclusively in seeds during embryogenesis.

It localises to the endoplasmic reticulum. The protein resides in the protein storage vacuole. Glycinin is the major seed storage protein of soybean. Glycinin basic peptides (GBPs), and, to a lower extent, glycinin exhibit antibacterial activity against Gram-negative and Gram-positive bacteria (e.g. L.monocytogenes, B.subtilis, E.coli and S.enteritidis) by forming pores and aggregating in transmembranes, leading to membrane permeability and, eventually, cell death. The polypeptide is Glycinin G2 (Glycine max (Soybean)).